A 245-amino-acid chain; its full sequence is 1-(5-phosphoribosyl)-5-[(5-phosphoribosylamino)methylideneamino] imidazole-4-carboxamide isomerase (245 aa).

Residue Asp-7 is the Proton acceptor of the active site. The Proton donor role is filled by Asp-129.

This sequence belongs to the HisA/HisF family.

The protein resides in the cytoplasm. The enzyme catalyses 1-(5-phospho-beta-D-ribosyl)-5-[(5-phospho-beta-D-ribosylamino)methylideneamino]imidazole-4-carboxamide = 5-[(5-phospho-1-deoxy-D-ribulos-1-ylimino)methylamino]-1-(5-phospho-beta-D-ribosyl)imidazole-4-carboxamide. Its pathway is amino-acid biosynthesis; L-histidine biosynthesis; L-histidine from 5-phospho-alpha-D-ribose 1-diphosphate: step 4/9. This chain is 1-(5-phosphoribosyl)-5-[(5-phosphoribosylamino)methylideneamino] imidazole-4-carboxamide isomerase, found in Shewanella loihica (strain ATCC BAA-1088 / PV-4).